We begin with the raw amino-acid sequence, 290 residues long: uncharacterized protein (290 aa).

Residues 153–178 form a disordered region; sequence EMVPITTSSTTPRSKGDEATSTGAFP. Residues 157-178 show a composition bias toward polar residues; that stretch reads ITTSSTTPRSKGDEATSTGAFP. The helical transmembrane segment at 202–222 threads the bilayer; sequence LIAVTLLLGGAAIIVFVIFEV. Residues 246–276 are disordered; it reads KEEDQKPGTTESQLDSQPEKVKHNVPNSSDS. The segment covering 252-261 has biased composition (polar residues); sequence PGTTESQLDS.

It is found in the membrane. This is an uncharacterized protein from Mus musculus (Mouse).